A 181-amino-acid polypeptide reads, in one-letter code: Ribosome maturation factor RimP (181 aa).

The protein belongs to the RimP family.

It is found in the cytoplasm. Its function is as follows. Required for maturation of 30S ribosomal subunits. This Sphingopyxis alaskensis (strain DSM 13593 / LMG 18877 / RB2256) (Sphingomonas alaskensis) protein is Ribosome maturation factor RimP.